Reading from the N-terminus, the 222-residue chain is Formimidoylglutamase (222 aa).

Positions 34, 59, 61, 63, 150, and 152 each coordinate Mn(2+).

The protein belongs to the arginase family. Mn(2+) serves as cofactor.

The enzyme catalyses N-formimidoyl-L-glutamate + H2O = formamide + L-glutamate. It functions in the pathway amino-acid degradation; L-histidine degradation into L-glutamate; L-glutamate from N-formimidoyl-L-glutamate (hydrolase route): step 1/1. Catalyzes the conversion of N-formimidoyl-L-glutamate to L-glutamate and formamide. This is Formimidoylglutamase (hutG) from Klebsiella aerogenes (Enterobacter aerogenes).